The following is a 424-amino-acid chain: Serine--tRNA ligase (424 aa).

229–231 (TAE) is a binding site for L-serine. Residues 259 to 261 (RKE) and Val-275 contribute to the ATP site. Glu-282 provides a ligand contact to L-serine. An ATP-binding site is contributed by 349-352 (EVTS). Residue Thr-383 participates in L-serine binding.

The protein belongs to the class-II aminoacyl-tRNA synthetase family. Type-1 seryl-tRNA synthetase subfamily. Homodimer. The tRNA molecule binds across the dimer.

The protein localises to the cytoplasm. It catalyses the reaction tRNA(Ser) + L-serine + ATP = L-seryl-tRNA(Ser) + AMP + diphosphate + H(+). It carries out the reaction tRNA(Sec) + L-serine + ATP = L-seryl-tRNA(Sec) + AMP + diphosphate + H(+). It participates in aminoacyl-tRNA biosynthesis; selenocysteinyl-tRNA(Sec) biosynthesis; L-seryl-tRNA(Sec) from L-serine and tRNA(Sec): step 1/1. Its function is as follows. Catalyzes the attachment of serine to tRNA(Ser). Is also able to aminoacylate tRNA(Sec) with serine, to form the misacylated tRNA L-seryl-tRNA(Sec), which will be further converted into selenocysteinyl-tRNA(Sec). The sequence is that of Serine--tRNA ligase from Borrelia recurrentis (strain A1).